A 315-amino-acid polypeptide reads, in one-letter code: Aspartate carbamoyltransferase catalytic subunit (315 aa).

Positions 65 and 66 each coordinate carbamoyl phosphate. Lysine 93 lines the L-aspartate pocket. Carbamoyl phosphate contacts are provided by arginine 115, histidine 145, and glutamine 148. Positions 179 and 234 each coordinate L-aspartate. 2 residues coordinate carbamoyl phosphate: glycine 275 and proline 276.

Belongs to the aspartate/ornithine carbamoyltransferase superfamily. ATCase family. As to quaternary structure, heterododecamer (2C3:3R2) of six catalytic PyrB chains organized as two trimers (C3), and six regulatory PyrI chains organized as three dimers (R2).

The enzyme catalyses carbamoyl phosphate + L-aspartate = N-carbamoyl-L-aspartate + phosphate + H(+). It participates in pyrimidine metabolism; UMP biosynthesis via de novo pathway; (S)-dihydroorotate from bicarbonate: step 2/3. Its function is as follows. Catalyzes the condensation of carbamoyl phosphate and aspartate to form carbamoyl aspartate and inorganic phosphate, the committed step in the de novo pyrimidine nucleotide biosynthesis pathway. In Xanthomonas euvesicatoria pv. vesicatoria (strain 85-10) (Xanthomonas campestris pv. vesicatoria), this protein is Aspartate carbamoyltransferase catalytic subunit.